Reading from the N-terminus, the 287-residue chain is D-alanine--D-alanine ligase (287 aa).

Positions 98–283 constitute an ATP-grasp domain; it reads KTKQIAQSVG…FDDVVRITVE (186 aa). 124 to 169 serves as a coordination point for ATP; sequence PVIIKPVDEGSSKGLFLCNNKEEAEEAVKKLAKPIIEDYIIGEELT. Aspartate 238, glutamate 250, and asparagine 252 together coordinate Mg(2+).

This sequence belongs to the D-alanine--D-alanine ligase family. It depends on Mg(2+) as a cofactor. Mn(2+) is required as a cofactor.

The protein resides in the cytoplasm. The catalysed reaction is 2 D-alanine + ATP = D-alanyl-D-alanine + ADP + phosphate + H(+). The protein operates within cell wall biogenesis; peptidoglycan biosynthesis. Functionally, cell wall formation. In Fusobacterium nucleatum subsp. nucleatum (strain ATCC 25586 / DSM 15643 / BCRC 10681 / CIP 101130 / JCM 8532 / KCTC 2640 / LMG 13131 / VPI 4355), this protein is D-alanine--D-alanine ligase.